A 455-amino-acid polypeptide reads, in one-letter code: Ribulose bisphosphate carboxylase large chain (455 aa).

Lys-5 carries the post-translational modification N6,N6,N6-trimethyllysine. Substrate is bound by residues Asn-114 and Thr-164. Catalysis depends on Lys-166, which acts as the Proton acceptor. Residue Lys-168 coordinates substrate. The Mg(2+) site is built by Lys-192, Asp-194, and Glu-195. N6-carboxylysine is present on Lys-192. His-285 serves as the catalytic Proton acceptor. Substrate-binding residues include Arg-286, His-318, and Ser-370.

The protein belongs to the RuBisCO large chain family. Type I subfamily. In terms of assembly, heterohexadecamer of 8 large chains and 8 small chains; disulfide-linked. The disulfide link is formed within the large subunit homodimers. Mg(2+) is required as a cofactor. The disulfide bond which can form in the large chain dimeric partners within the hexadecamer appears to be associated with oxidative stress and protein turnover.

The protein resides in the plastid. Its subcellular location is the chloroplast. The catalysed reaction is 2 (2R)-3-phosphoglycerate + 2 H(+) = D-ribulose 1,5-bisphosphate + CO2 + H2O. The enzyme catalyses D-ribulose 1,5-bisphosphate + O2 = 2-phosphoglycolate + (2R)-3-phosphoglycerate + 2 H(+). Functionally, ruBisCO catalyzes two reactions: the carboxylation of D-ribulose 1,5-bisphosphate, the primary event in carbon dioxide fixation, as well as the oxidative fragmentation of the pentose substrate in the photorespiration process. Both reactions occur simultaneously and in competition at the same active site. This chain is Ribulose bisphosphate carboxylase large chain, found in Lupinus digitatus (Lupine).